Reading from the N-terminus, the 259-residue chain is 2,3-dihydroxy-2,3-dihydro-p-cumate dehydrogenase (259 aa).

Residue 18–42 (VTGGAHGIGLGIVERLLGLGARVTA) participates in NAD(+) binding. The active-site Proton acceptor is Y163.

Belongs to the short-chain dehydrogenases/reductases (SDR) family.

The catalysed reaction is (2R,3S)-2,3-dihydroxy-2,3-dihydro-p-cumate + NAD(+) = 2,3-dihydroxy-p-cumate + NADH + H(+). The protein operates within aromatic compound metabolism; p-cumate degradation; acetaldehyde and pyruvate from p-cumate: step 2/7. This Pseudomonas putida (strain ATCC 700007 / DSM 6899 / JCM 31910 / BCRC 17059 / LMG 24140 / F1) protein is 2,3-dihydroxy-2,3-dihydro-p-cumate dehydrogenase (cmtB).